Consider the following 501-residue polypeptide: Protein translocase subunit SecD (501 aa).

6 helical membrane-spanning segments follow: residues 9 to 29 (NLWL…YAVV), 339 to 359 (AIEQ…VVLI), 371 to 391 (ISIF…GATL), 394 to 414 (PGIA…VLIF), 447 to 467 (VTLL…VKGF), and 470 to 490 (TLAL…KVFL).

The protein belongs to the SecD/SecF family. SecD subfamily. In terms of assembly, forms a complex with SecF. Part of the essential Sec protein translocation apparatus which comprises SecA, SecYEG and auxiliary proteins SecDF. Other proteins may also be involved.

It is found in the cell inner membrane. In terms of biological role, part of the Sec protein translocase complex. Interacts with the SecYEG preprotein conducting channel. SecDF uses the proton motive force (PMF) to complete protein translocation after the ATP-dependent function of SecA. The sequence is that of Protein translocase subunit SecD from Aquifex aeolicus (strain VF5).